A 222-amino-acid chain; its full sequence is Gamma-glutamyl cyclotransferase gliK (222 aa).

2 consecutive transmembrane segments (helical) span residues Gly154–Ile174 and Gly187–Gln207.

This sequence belongs to the class-I pyridoxal-phosphate-dependent aminotransferase family.

It is found in the membrane. It carries out the reaction an alpha-(gamma-L-glutamyl)-L-amino acid = 5-oxo-L-proline + an L-alpha-amino acid. It functions in the pathway secondary metabolite biosynthesis. Gamma-glutamyl cyclotransferase; part of the gene cluster that mediates the biosynthesis of an unusual class of epipolythiodioxopiperazines (ETPs) lacking the reactive thiol group important for toxicity. Firstly, L-tyrosine is prenylated by tcpD, before undergoing condensation with L-glycine in a reaction catalyzed by the NRPS tcpP leading to the diketopiperazine (DKP) backbone. Afterwards the alpha-carbon of tyrosine is oxidized by the cytochrome P450 tcpC to form a hydroxyl group. However, in contrast other ETP biosynthesis pathways studied so far, tcpC is not able to bishydroxylate the DKP at both alpha-carbon positions, but hydroxylates the alpha-carbon of the tyrosine part and the nitrogen of the glycine part. The next steps involve an alpha,beta-elimination reaction catalyzed by tcpI, a methylation by the methyltransferase tcpN the action of the four enzyme cascade tcpG/K/J/I. Due to a dysfunctional cytochrome P450 monooxygenase tcpC, the pathway leads to the biosynthesis of probable non-toxic metabolites lacking the reactive thiol group. This Claviceps purpurea (strain 20.1) (Ergot fungus) protein is Gamma-glutamyl cyclotransferase gliK.